We begin with the raw amino-acid sequence, 303 residues long: MAGAACEPVARPSLTSISSGELRSLWTCDCELALLPLAQLLRLQPGAFQLSGDQLVVARPGEPAAARGGFNVFGDGLVRLDGQLYRLSSYIKRYVELTNYCDYKDYRETILSKPMLFFINVQTKKDTSKERTYAFLVNTRHPKIRRQIEQGMDMVISSVIGESYRLQFDFQEAVKNFFPPGNEVVNGENLSFAYEFKADALFDFFYWFGLSNSVVKVNGKVLNLSSTSPEKKETIKLFLEKMSEPLIRRSSFSDRKFSVTSRGSIDDVFNCNLSPRSSLTEPLLAELPFPSVLESEETPNQFI.

As to expression, highly expressed in the visceral fat depot.

It is found in the cytoplasm. Its function is as follows. Involved in processes that promote adipocyte differentiation, lipid accumulation, and glucose uptake in mature adipocytes. This Homo sapiens (Human) protein is Mesenteric estrogen-dependent adipogenesis protein (MEDAG).